A 942-amino-acid polypeptide reads, in one-letter code: Glutamyl aminopeptidase (942 aa).

The Cytoplasmic portion of the chain corresponds to 1–14 (MSTDSKRYCIKTKH). Residues 15–35 (VAIICAAVVAVGLIVGLSVGL) traverse the membrane as a helical; Signal-anchor for type II membrane protein segment. The Extracellular segment spans residues 36–942 (TRSCDSKDGG…RDTIRDWFFN (907 aa)). The tract at residues 40-74 (DSKDGGQGTTQSPSHLPPTSSPPQDQGVCPASEDE) is disordered. Asn-110, Asn-114, and Asn-187 each carry an N-linked (GlcNAc...) asparagine glycan. Glu-213 is a substrate binding site. Asn-314 is a glycosylation site (N-linked (GlcNAc...) asparagine). 347-351 (GAMEN) serves as a coordination point for substrate. Asn-367 carries an N-linked (GlcNAc...) asparagine glycan. His-383 lines the Zn(2+) pocket. Glu-384 acts as the Proton acceptor in catalysis. Positions 387 and 406 each coordinate Zn(2+). N-linked (GlcNAc...) asparagine glycans are attached at residues Asn-557, Asn-579, Asn-587, Asn-597, Asn-632, Asn-668, Asn-753, Asn-786, and Asn-791. Position 877 (Arg-877) interacts with substrate.

This sequence belongs to the peptidase M1 family. In terms of assembly, homodimer; disulfide-linked. Zn(2+) serves as cofactor.

It is found in the cell membrane. It carries out the reaction Release of N-terminal glutamate (and to a lesser extent aspartate) from a peptide.. Its activity is regulated as follows. Substrate specificity is modulated by calcium which enhances the enzymatic activity for cleavage of acidic residues while reducing its activity with basic residues. Inhibited by aminopeptidase inhibitors amastatin and bestatin. Its function is as follows. Regulates central hypertension through its calcium-modulated preference to cleave N-terminal acidic residues from peptides such as angiotensin II. The sequence is that of Glutamyl aminopeptidase (ENPEP) from Sus scrofa (Pig).